A 305-amino-acid polypeptide reads, in one-letter code: UDP-3-O-acyl-N-acetylglucosamine deacetylase (305 aa).

Zn(2+)-binding residues include His79, His238, and Asp242. Residue His265 is the Proton donor of the active site.

Belongs to the LpxC family. Requires Zn(2+) as cofactor.

The catalysed reaction is a UDP-3-O-[(3R)-3-hydroxyacyl]-N-acetyl-alpha-D-glucosamine + H2O = a UDP-3-O-[(3R)-3-hydroxyacyl]-alpha-D-glucosamine + acetate. Its pathway is glycolipid biosynthesis; lipid IV(A) biosynthesis; lipid IV(A) from (3R)-3-hydroxytetradecanoyl-[acyl-carrier-protein] and UDP-N-acetyl-alpha-D-glucosamine: step 2/6. Functionally, catalyzes the hydrolysis of UDP-3-O-myristoyl-N-acetylglucosamine to form UDP-3-O-myristoylglucosamine and acetate, the committed step in lipid A biosynthesis. The polypeptide is UDP-3-O-acyl-N-acetylglucosamine deacetylase (Salmonella arizonae (strain ATCC BAA-731 / CDC346-86 / RSK2980)).